The chain runs to 249 residues: Ubiquinone/menaquinone biosynthesis C-methyltransferase UbiE (249 aa).

Residues threonine 74, aspartate 93, and 121–122 (DA) contribute to the S-adenosyl-L-methionine site.

This sequence belongs to the class I-like SAM-binding methyltransferase superfamily. MenG/UbiE family.

The catalysed reaction is a 2-demethylmenaquinol + S-adenosyl-L-methionine = a menaquinol + S-adenosyl-L-homocysteine + H(+). It catalyses the reaction a 2-methoxy-6-(all-trans-polyprenyl)benzene-1,4-diol + S-adenosyl-L-methionine = a 5-methoxy-2-methyl-3-(all-trans-polyprenyl)benzene-1,4-diol + S-adenosyl-L-homocysteine + H(+). The protein operates within quinol/quinone metabolism; menaquinone biosynthesis; menaquinol from 1,4-dihydroxy-2-naphthoate: step 2/2. Its pathway is cofactor biosynthesis; ubiquinone biosynthesis. Functionally, methyltransferase required for the conversion of demethylmenaquinol (DMKH2) to menaquinol (MKH2) and the conversion of 2-polyprenyl-6-methoxy-1,4-benzoquinol (DDMQH2) to 2-polyprenyl-3-methyl-6-methoxy-1,4-benzoquinol (DMQH2). The sequence is that of Ubiquinone/menaquinone biosynthesis C-methyltransferase UbiE from Acidiphilium cryptum (strain JF-5).